Consider the following 1149-residue polypeptide: Beta-alanine-activating enzyme (1149 aa).

ATP contacts are provided by residues 178-186 (TSGTTGLPK), Asp-408, Arg-422, and Lys-543. Positions 570 to 646 (ASVRLKLQNL…DLLSHIMTET (77 aa)) constitute a Carrier domain. Ser-605 bears the O-(pantetheine 4'-phosphoryl)serine mark. The interval 653-683 (PSKKRTADYSDSEASGKRQHKEMTTSSDTES) is disordered.

Belongs to the ATP-dependent AMP-binding enzyme family.

Functionally, covalently binds beta-alanine in an ATP-dependent manner to form a thioester bond with its phosphopantetheine group and transfers it to an, as yet, unknown acceptor. May be required for a post-translational protein modification or for post-transcriptional modification of an RNA. The protein is Beta-alanine-activating enzyme (aasdh) of Danio rerio (Zebrafish).